The chain runs to 461 residues: Vitamin K-dependent protein C (461 aa).

Positions 1–18 (MWQFRIFLLFASTWGISG) are cleaved as a signal peptide. Positions 19–41 (VSAHPDPVFSSSEGAHQVLRVRR) are excised as a propeptide. The Gla domain occupies 42-87 (ANSFLEEVRAGSLERECMEEICDFEEAQEIFQNVEDTLAFWIKYFD). 4-carboxyglutamate occurs at positions 47, 48, 55, 57, 60, 61, 66, 67, 70, and 76. C58 and C63 are oxidised to a cystine. 9 disulfides stabilise this stretch: C91–C110, C100–C105, C104–C119, C121–C130, C139–C150, C146–C159, C161–C174, C182–C320, and C239–C255. 2 consecutive EGF-like domains span residues 96 to 131 (LDHQ…RFCQ) and 135 to 175 (GFQD…MHCR). Position 112 is a (3R)-3-hydroxyaspartate (D112). In terms of domain architecture, Peptidase S1 spans 213–450 (IVNGTLTKQG…YLKWIHSYIG (238 aa)). An N-linked (GlcNAc...) asparagine glycan is attached at N215. H254 serves as the catalytic Charge relay system. An N-linked (GlcNAc...) asparagine glycan is attached at N291. D300 acts as the Charge relay system in catalysis. N355 carries N-linked (GlcNAc...) asparagine glycosylation. 2 disulfide bridges follow: C373-C387 and C398-C426. The active-site Charge relay system is the S402.

This sequence belongs to the peptidase S1 family. In terms of assembly, synthesized as a single chain precursor, which is cleaved into a light chain and a heavy chain held together by a disulfide bond. The enzyme is then activated by thrombin, which cleaves a tetradecapeptide from the amino end of the heavy chain; this reaction, which occurs at the surface of endothelial cells, is strongly promoted by thrombomodulin. The vitamin K-dependent, enzymatic carboxylation of some Glu residues allows the modified protein to bind calcium. In terms of processing, the iron and 2-oxoglutarate dependent 3-hydroxylation of aspartate and asparagine is (R) stereospecific within EGF domains. In terms of tissue distribution, plasma; synthesized in the liver.

It localises to the secreted. It is found in the golgi apparatus. The protein resides in the endoplasmic reticulum. The catalysed reaction is Degradation of blood coagulation factors Va and VIIIa.. In terms of biological role, protein C is a vitamin K-dependent serine protease that regulates blood coagulation by inactivating factors Va and VIIIa in the presence of calcium ions and phospholipids. Exerts a protective effect on the endothelial cell barrier function. The sequence is that of Vitamin K-dependent protein C (Proc) from Rattus norvegicus (Rat).